We begin with the raw amino-acid sequence, 364 residues long: Spermidine/putrescine import ATP-binding protein PotA (364 aa).

In terms of domain architecture, ABC transporter spans leucine 5–isoleucine 235. Position 37–44 (glycine 37–threonine 44) interacts with ATP.

This sequence belongs to the ABC transporter superfamily. Spermidine/putrescine importer (TC 3.A.1.11.1) family. The complex is composed of two ATP-binding proteins (PotA), two transmembrane proteins (PotB and PotC) and a solute-binding protein (PotD).

It is found in the cell membrane. It carries out the reaction ATP + H2O + polyamine-[polyamine-binding protein]Side 1 = ADP + phosphate + polyamineSide 2 + [polyamine-binding protein]Side 1.. Functionally, part of the ABC transporter complex PotABCD involved in spermidine/putrescine import. Responsible for energy coupling to the transport system. The protein is Spermidine/putrescine import ATP-binding protein PotA of Staphylococcus saprophyticus subsp. saprophyticus (strain ATCC 15305 / DSM 20229 / NCIMB 8711 / NCTC 7292 / S-41).